The sequence spans 264 residues: S-adenosylmethionine decarboxylase proenzyme (264 aa).

Residue Ser-114 is the Schiff-base intermediate with substrate; via pyruvic acid of the active site. Ser-114 carries the post-translational modification Pyruvic acid (Ser); by autocatalysis. The active-site Proton acceptor; for processing activity is His-119. Cys-142 serves as the catalytic Proton donor; for catalytic activity.

It belongs to the prokaryotic AdoMetDC family. Type 2 subfamily. Heterooctamer of four alpha and four beta chains arranged as a tetramer of alpha/beta heterodimers. Requires pyruvate as cofactor. Post-translationally, is synthesized initially as an inactive proenzyme. Formation of the active enzyme involves a self-maturation process in which the active site pyruvoyl group is generated from an internal serine residue via an autocatalytic post-translational modification. Two non-identical subunits are generated from the proenzyme in this reaction, and the pyruvate is formed at the N-terminus of the alpha chain, which is derived from the carboxyl end of the proenzyme. The post-translation cleavage follows an unusual pathway, termed non-hydrolytic serinolysis, in which the side chain hydroxyl group of the serine supplies its oxygen atom to form the C-terminus of the beta chain, while the remainder of the serine residue undergoes an oxidative deamination to produce ammonia and the pyruvoyl group blocking the N-terminus of the alpha chain.

The catalysed reaction is S-adenosyl-L-methionine + H(+) = S-adenosyl 3-(methylsulfanyl)propylamine + CO2. The protein operates within amine and polyamine biosynthesis; S-adenosylmethioninamine biosynthesis; S-adenosylmethioninamine from S-adenosyl-L-methionine: step 1/1. Catalyzes the decarboxylation of S-adenosylmethionine to S-adenosylmethioninamine (dcAdoMet), the propylamine donor required for the synthesis of the polyamines spermine and spermidine from the diamine putrescine. This Chromohalobacter salexigens (strain ATCC BAA-138 / DSM 3043 / CIP 106854 / NCIMB 13768 / 1H11) protein is S-adenosylmethionine decarboxylase proenzyme.